We begin with the raw amino-acid sequence, 320 residues long: Short-chain dehydrogenase/reductase ATR7 (320 aa).

NADP(+) is bound by residues Ser32, Ile34, Gln55, Asp70, Asn93, Lys134, Tyr167, Lys171, and Thr202. The active-site Proton acceptor is Tyr167. Residue Lys171 is the Lowers pKa of active site Tyr of the active site.

It belongs to the short-chain dehydrogenases/reductases (SDR) family.

Its pathway is mycotoxin biosynthesis. Its function is as follows. Short-chain dehydrogenase/reductase; part of the core atranone cluster (CAC) which products are predicted to catalyze most or all steps of mycotoxin atranone synthesis, starting from geranylgeranyl pyrophosphate (GGPP). The initial cyclization of GGPP to dolabellane is probably performed by the terpene cyclase ATR13. The Baeyer-Villiger oxidation near the end of the atranone synthesis, which converts atranones D and E to atranones F and G is predicted to be catalyzed by the monooxygenase ATR8. Of the CAC's other predicted gene products, the reducing PKS ATR6 might synthesize a polyketide chain. This polyketide is probably transferred onto the atranone backbone by the polyketide transferase ATR5. Other predicted CAC products include 4 oxygenases (ATR2, ATR3, ATR4, and ATR14), 3 short-chain reductases (ATR7, ATR9, and ATR10), and a methyltransferase (ATR12). These may all be involved in the various steps of atranone biosynthesis, although their specific roles must await experimental determination. The chain is Short-chain dehydrogenase/reductase ATR7 from Stachybotrys chlorohalonatus (strain IBT 40285).